Here is a 149-residue protein sequence, read N- to C-terminus: 3-dehydroquinate dehydratase (149 aa).

Catalysis depends on Tyr-22, which acts as the Proton acceptor. Substrate is bound by residues Asn-73, His-79, and Asp-86. His-99 functions as the Proton donor in the catalytic mechanism. Substrate-binding positions include 100-101 (LS) and Arg-110.

This sequence belongs to the type-II 3-dehydroquinase family. In terms of assembly, homododecamer.

The enzyme catalyses 3-dehydroquinate = 3-dehydroshikimate + H2O. The protein operates within metabolic intermediate biosynthesis; chorismate biosynthesis; chorismate from D-erythrose 4-phosphate and phosphoenolpyruvate: step 3/7. Functionally, catalyzes a trans-dehydration via an enolate intermediate. The chain is 3-dehydroquinate dehydratase from Prochlorococcus marinus (strain SARG / CCMP1375 / SS120).